A 792-amino-acid polypeptide reads, in one-letter code: Phenylalanine--tRNA ligase beta subunit (792 aa).

In terms of domain architecture, tRNA-binding spans 39–147 (ARTLEKVVVG…ADAPIGKNIQ (109 aa)). The region spanning 400–475 (PKIPRIILRP…HLYGYDRIPQ (76 aa)) is the B5 domain. Mg(2+)-binding residues include aspartate 453, aspartate 459, glutamate 462, and glutamate 463. Residues 697–791 (SKFPSIRRDI…LERKFNAKLR (95 aa)) enclose the FDX-ACB domain.

It belongs to the phenylalanyl-tRNA synthetase beta subunit family. Type 1 subfamily. In terms of assembly, tetramer of two alpha and two beta subunits. Mg(2+) serves as cofactor.

The protein resides in the cytoplasm. The enzyme catalyses tRNA(Phe) + L-phenylalanine + ATP = L-phenylalanyl-tRNA(Phe) + AMP + diphosphate + H(+). This Coxiella burnetii (strain RSA 493 / Nine Mile phase I) protein is Phenylalanine--tRNA ligase beta subunit.